Reading from the N-terminus, the 545-residue chain is MLAARLIILLSFYWLSASAIDPADPLFVDLPHGKIRGRDNGFYYSYESLPYAEPPVGELRFEAPQPYKQQWTDTFDATQPPVTCMQWNQFIFGDNKLAGVEDCLTVSIYKPKNTSQSSFPVVAHMHGGAFMFGEARQNGHENMMREGKLILVKISYRLGPLGFASTGDAGLSGNFGLKDQRLALLWIKQNIASFGGEPENIIVVGHSAGGASVHLQMLREDFAQVAKAGISFGGNAMDPWVIHRSARGRTFELGRIVGCGQASDSMELKNCLKSKPAGEIVSAVHSFLVFAYVPFAPFGPVVESPDAPEAFISQHPVDIIKSGKFAQVPWAVTYNTEDGGYNAAVLLEKQASSGRELIFDLNDHWFDWAPYLLFYRDSMTTIKDMDDYSRKLRQEYLGDRRFSVESYWDLQRLFTDVLYKNATELALDLYRKHGKSPVYAFVYDNPANTGIGQFFAKRTDVHFGTVHGDEYFLIFENLARGPEMRSDEEIISRNFLNMINDFVLSGNGTMTFGNCVLQDNVGSNKLQLLSITKNGCENLQLESFP.

The signal sequence occupies residues 1–19 (MLAARLIILLSFYWLSASA). Cysteines 84 and 103 form a disulfide. An N-linked (GlcNAc...) asparagine glycan is attached at Asn-113. The active-site Acyl-ester intermediate is the Ser-207. Cys-259 and Cys-271 are joined by a disulfide. A glycan (N-linked (GlcNAc...) asparagine) is linked at Asn-421. The active-site Charge relay system is His-467. Asn-507 is a glycosylation site (N-linked (GlcNAc...) asparagine). Cys-515 and Cys-536 are disulfide-bonded.

The protein belongs to the type-B carboxylesterase/lipase family.

It is found in the secreted. The catalysed reaction is a carboxylic ester + H2O = an alcohol + a carboxylate + H(+). The polypeptide is Esterase-5C (Est-5C) (Drosophila miranda (Fruit fly)).